A 76-amino-acid polypeptide reads, in one-letter code: Translational regulator CsrA (76 aa).

Belongs to the CsrA/RsmA family. As to quaternary structure, homodimer; the beta-strands of each monomer intercalate to form a hydrophobic core, while the alpha-helices form wings that extend away from the core.

The protein resides in the cytoplasm. In terms of biological role, a translational regulator that binds mRNA to regulate translation initiation and/or mRNA stability. Usually binds in the 5'-UTR at or near the Shine-Dalgarno sequence preventing ribosome-binding, thus repressing translation. Its main target seems to be the major flagellin gene, while its function is anatagonized by FliW. In Pseudothermotoga lettingae (strain ATCC BAA-301 / DSM 14385 / NBRC 107922 / TMO) (Thermotoga lettingae), this protein is Translational regulator CsrA.